Consider the following 156-residue polypeptide: 6,7-dimethyl-8-ribityllumazine synthase (156 aa).

Residues F23, 57–59 (AYE), and 81–83 (AII) each bind 5-amino-6-(D-ribitylamino)uracil. 86-87 (GT) contacts (2S)-2-hydroxy-3-oxobutyl phosphate. H89 functions as the Proton donor in the catalytic mechanism. F114 is a 5-amino-6-(D-ribitylamino)uracil binding site. Residue R128 participates in (2S)-2-hydroxy-3-oxobutyl phosphate binding.

It belongs to the DMRL synthase family.

The catalysed reaction is (2S)-2-hydroxy-3-oxobutyl phosphate + 5-amino-6-(D-ribitylamino)uracil = 6,7-dimethyl-8-(1-D-ribityl)lumazine + phosphate + 2 H2O + H(+). It functions in the pathway cofactor biosynthesis; riboflavin biosynthesis; riboflavin from 2-hydroxy-3-oxobutyl phosphate and 5-amino-6-(D-ribitylamino)uracil: step 1/2. Its function is as follows. Catalyzes the formation of 6,7-dimethyl-8-ribityllumazine by condensation of 5-amino-6-(D-ribitylamino)uracil with 3,4-dihydroxy-2-butanone 4-phosphate. This is the penultimate step in the biosynthesis of riboflavin. In Helicobacter pylori (strain HPAG1), this protein is 6,7-dimethyl-8-ribityllumazine synthase.